A 197-amino-acid chain; its full sequence is Holliday junction branch migration complex subunit RuvA (197 aa).

Residues 1–63 form a domain I region; sequence MIALLNGQLI…EDALLLFGFL (63 aa). A domain II region spans residues 64–142; it reads TETEKDLFGL…PVQAVPGNAP (79 aa). A flexible linker region spans residues 142-146; that stretch reads PLPAE. A domain III region spans residues 147–197; sequence TAGDLREDALSALVNLGYKENLSRKALDGIDTAPDAPLEDILKQALKLLMR.

It belongs to the RuvA family. Homotetramer. Forms an RuvA(8)-RuvB(12)-Holliday junction (HJ) complex. HJ DNA is sandwiched between 2 RuvA tetramers; dsDNA enters through RuvA and exits via RuvB. An RuvB hexamer assembles on each DNA strand where it exits the tetramer. Each RuvB hexamer is contacted by two RuvA subunits (via domain III) on 2 adjacent RuvB subunits; this complex drives branch migration. In the full resolvosome a probable DNA-RuvA(4)-RuvB(12)-RuvC(2) complex forms which resolves the HJ.

It is found in the cytoplasm. In terms of biological role, the RuvA-RuvB-RuvC complex processes Holliday junction (HJ) DNA during genetic recombination and DNA repair, while the RuvA-RuvB complex plays an important role in the rescue of blocked DNA replication forks via replication fork reversal (RFR). RuvA specifically binds to HJ cruciform DNA, conferring on it an open structure. The RuvB hexamer acts as an ATP-dependent pump, pulling dsDNA into and through the RuvAB complex. HJ branch migration allows RuvC to scan DNA until it finds its consensus sequence, where it cleaves and resolves the cruciform DNA. This chain is Holliday junction branch migration complex subunit RuvA, found in Syntrophotalea carbinolica (strain DSM 2380 / NBRC 103641 / GraBd1) (Pelobacter carbinolicus).